A 65-amino-acid chain; its full sequence is Large ribosomal subunit protein uL29 (65 aa).

Belongs to the universal ribosomal protein uL29 family.

This chain is Large ribosomal subunit protein uL29, found in Acinetobacter baumannii (strain AB307-0294).